The primary structure comprises 437 residues: Aspartate--tRNA(Asp/Asn) ligase (437 aa).

Glu-175 contacts L-aspartate. The interval Gln-197–Lys-200 is aspartate. Arg-219 contributes to the L-aspartate binding site. ATP-binding positions include Arg-219–Glu-221, Arg-227–Leu-229, and Glu-360. Glu-360 and Ser-363 together coordinate Mg(2+). Residues Ser-363 and Arg-367 each contribute to the L-aspartate site. An ATP-binding site is contributed by Gly-408–Arg-411.

It belongs to the class-II aminoacyl-tRNA synthetase family. Type 2 subfamily. In terms of assembly, homodimer. Requires Mg(2+) as cofactor.

It localises to the cytoplasm. It catalyses the reaction tRNA(Asx) + L-aspartate + ATP = L-aspartyl-tRNA(Asx) + AMP + diphosphate. Functionally, aspartyl-tRNA synthetase with relaxed tRNA specificity since it is able to aspartylate not only its cognate tRNA(Asp) but also tRNA(Asn). Reaction proceeds in two steps: L-aspartate is first activated by ATP to form Asp-AMP and then transferred to the acceptor end of tRNA(Asp/Asn). The polypeptide is Aspartate--tRNA(Asp/Asn) ligase (Methanothermobacter thermautotrophicus (strain ATCC 29096 / DSM 1053 / JCM 10044 / NBRC 100330 / Delta H) (Methanobacterium thermoautotrophicum)).